Reading from the N-terminus, the 82-residue chain is MIKKLLIYFVRFYQYTLSPLLGLTCRFYPTCSEYMILALQKHGAMKGAYLGVKRICRCHPWNPGGHDPVPESTILSKEKSVK.

A disordered region spans residues 63–82 (PGGHDPVPESTILSKEKSVK).

Belongs to the UPF0161 family.

It is found in the cell inner membrane. In terms of biological role, could be involved in insertion of integral membrane proteins into the membrane. The chain is Putative membrane protein insertion efficiency factor from Protochlamydia amoebophila (strain UWE25).